The sequence spans 242 residues: ATP synthase subunit a (242 aa).

The next 6 membrane-spanning stretches (helical) occupy residues 29-49, 84-104, 114-134, 140-160, 181-201, and 203-223; these read SSIY…LAFY, FIPL…LGMT, IIVT…VGFV, FLTL…MIVI, MAGH…MIYL, and FLPI…AILQ.

It belongs to the ATPase A chain family. In terms of assembly, F-type ATPases have 2 components, CF(1) - the catalytic core - and CF(0) - the membrane proton channel. CF(1) has five subunits: alpha(3), beta(3), gamma(1), delta(1), epsilon(1). CF(0) has three main subunits: a(1), b(2) and c(9-12). The alpha and beta chains form an alternating ring which encloses part of the gamma chain. CF(1) is attached to CF(0) by a central stalk formed by the gamma and epsilon chains, while a peripheral stalk is formed by the delta and b chains.

The protein resides in the cell inner membrane. In terms of biological role, key component of the proton channel; it plays a direct role in the translocation of protons across the membrane. The sequence is that of ATP synthase subunit a from Rickettsia conorii (strain ATCC VR-613 / Malish 7).